A 307-amino-acid chain; its full sequence is UDP-3-O-acyl-N-acetylglucosamine deacetylase (307 aa).

Positions 80, 239, and 243 each coordinate Zn(2+). His-266 (proton donor) is an active-site residue.

This sequence belongs to the LpxC family. Requires Zn(2+) as cofactor.

It catalyses the reaction a UDP-3-O-[(3R)-3-hydroxyacyl]-N-acetyl-alpha-D-glucosamine + H2O = a UDP-3-O-[(3R)-3-hydroxyacyl]-alpha-D-glucosamine + acetate. It functions in the pathway glycolipid biosynthesis; lipid IV(A) biosynthesis; lipid IV(A) from (3R)-3-hydroxytetradecanoyl-[acyl-carrier-protein] and UDP-N-acetyl-alpha-D-glucosamine: step 2/6. Its function is as follows. Catalyzes the hydrolysis of UDP-3-O-myristoyl-N-acetylglucosamine to form UDP-3-O-myristoylglucosamine and acetate, the committed step in lipid A biosynthesis. The protein is UDP-3-O-acyl-N-acetylglucosamine deacetylase of Neisseria meningitidis serogroup C (strain 053442).